Consider the following 576-residue polypeptide: MSSWNEAWDRGKQMVGEPLAKMTAAAASATGAAPPQQMQEEGNENPMQMHSNKVLQVMEQTWIGKCRKRWLLAILANMGFMISFGIRCNFGAAKTHMYKNYTDPYGKVHMHEFNWTIDELSVMESSYFYGYLVTQIPAGFLAAKFPPNKLFGFGIGVGAFLNILLPYGFKVKSDYLVAFIQITQGLVQGVCYPAMHGVWRYWAPPMERSKLATTAFTGSYAGAVLGLPLSAFLVSYVSWAAPFYLYGVCGVIWAILWFCVTFEKPAFHPTISQEEKIFIEDAIGHVSNTHPTIRSIPWKAIVTSKPVWAIIVANFARSWTFYLLLQNQLTYMKEALGMKIADSGLLAAIPHLVMGCVVLMGGQLADYLRSNKILSTTAVRKIFNCGGFGGEAAFMLIVAYTTSDTTAIMALIAAVGMSGFAISGFNVNHLDIAPRYAAILMGFSNGIGTLAGLTCPFVTEAFTAHSKHGWTSVFLLASLIHFTGVTFYAVYASGELQEWAEPKEEEEWSNKELVNKTGINGTGYGAAETTFTQLPAGVDSSYQAQAAPAPGTNPFASAWDEHGSSGVVENPHYQQW.

Topologically, residues 1 to 69 (MSSWNEAWDR…QTWIGKCRKR (69 aa)) are cytoplasmic. The disordered stretch occupies residues 25–46 (AAASATGAAPPQQMQEEGNENP). Residues 36–46 (QQMQEEGNENP) show a composition bias toward polar residues. A helical membrane pass occupies residues 70-90 (WLLAILANMGFMISFGIRCNF). At 91–121 (GAAKTHMYKNYTDPYGKVHMHEFNWTIDELS) the chain is on the extracellular side. N-linked (GlcNAc...) asparagine glycosylation is found at Asn-100 and Asn-114. The chain crosses the membrane as a helical span at residues 122–142 (VMESSYFYGYLVTQIPAGFLA). Over 143–150 (AKFPPNKL) the chain is Cytoplasmic. The chain crosses the membrane as a helical span at residues 151–171 (FGFGIGVGAFLNILLPYGFKV). Residues 172–174 (KSD) lie on the Extracellular side of the membrane. Residues 175–195 (YLVAFIQITQGLVQGVCYPAM) form a helical membrane-spanning segment. Topologically, residues 196–213 (HGVWRYWAPPMERSKLAT) are cytoplasmic. Residues 214–234 (TAFTGSYAGAVLGLPLSAFLV) form a helical membrane-spanning segment. Topologically, residues 235–239 (SYVSW) are extracellular. The chain crosses the membrane as a helical span at residues 240-260 (AAPFYLYGVCGVIWAILWFCV). At 261 to 305 (TFEKPAFHPTISQEEKIFIEDAIGHVSNTHPTIRSIPWKAIVTSK) the chain is on the cytoplasmic side. Residues 306 to 325 (PVWAIIVANFARSWTFYLLL) traverse the membrane as a helical segment. Over 326-344 (QNQLTYMKEALGMKIADSG) the chain is Extracellular. A helical transmembrane segment spans residues 345–365 (LLAAIPHLVMGCVVLMGGQLA). At 366 to 381 (DYLRSNKILSTTAVRK) the chain is on the cytoplasmic side. Residues 382–402 (IFNCGGFGGEAAFMLIVAYTT) traverse the membrane as a helical segment. Topologically, residues 403–406 (SDTT) are extracellular. Residues 407 to 427 (AIMALIAAVGMSGFAISGFNV) form a helical membrane-spanning segment. Topologically, residues 428-437 (NHLDIAPRYA) are cytoplasmic. A helical transmembrane segment spans residues 438–458 (AILMGFSNGIGTLAGLTCPFV). At 459-471 (TEAFTAHSKHGWT) the chain is on the extracellular side. A helical transmembrane segment spans residues 472-492 (SVFLLASLIHFTGVTFYAVYA). Residues 493-576 (SGELQEWAEP…VVENPHYQQW (84 aa)) lie on the Cytoplasmic side of the membrane.

Belongs to the major facilitator superfamily. Sodium/anion cotransporter family. VGLUT subfamily. In terms of tissue distribution, expressed in neurons of the pharynx and the extrapharyngeal nervous system. Highly expressed in male PHC sensory neurons.

The protein localises to the cell membrane. The protein resides in the synapse. Required for glutamatergic synaptic transmission. In AWB and AWC sensory neurons, required for the detection of preferred food sources, probably via glutamatergic neurotransmission from sensory neurons. Negatively regulates the turning step of male mating behavior. The chain is Probable vesicular glutamate transporter eat-4 from Caenorhabditis elegans.